Here is a 715-residue protein sequence, read N- to C-terminus: Methylmalonyl-CoA mutase large subunit (715 aa).

(R)-methylmalonyl-CoA-binding residues include Tyr70, Met73, Arg77, Thr80, Arg82, Tyr84, and Ser109. The cob(II)alamin site is built by Phe112 and Ala134. Residues Thr190 and Gln192 each coordinate (R)-methylmalonyl-CoA. Residues Val201 and Arg202 each contribute to the cob(II)alamin site. (R)-methylmalonyl-CoA-binding residues include Arg202, His239, Arg278, and Ser280. Residues Gly328, Glu365, Ala368, Gly599, His600, Asp601, Arg602, Ser645, Leu647, Gly676, and Thr699 each coordinate cob(II)alamin. In terms of domain architecture, B12-binding spans 587-715 (QPRIMIAKMG…AKVLEILLEE (129 aa)).

It belongs to the methylmalonyl-CoA mutase family. In terms of assembly, heterodimer of an alpha and a beta chain. Adenosylcob(III)alamin is required as a cofactor.

It carries out the reaction (R)-methylmalonyl-CoA = succinyl-CoA. Catalyzes the isomerization of succinyl-CoA to methylmalonyl-CoA during synthesis of propionate from tricarboxylic acid-cycle intermediates. In Porphyromonas gingivalis (strain ATCC BAA-308 / W83), this protein is Methylmalonyl-CoA mutase large subunit (mutB).